We begin with the raw amino-acid sequence, 750 residues long: Photosystem I P700 chlorophyll a apoprotein A1 (750 aa).

Transmembrane regions (helical) follow at residues 70 to 93, 156 to 179, 195 to 219, 291 to 309, 346 to 369, 385 to 411, 433 to 455, and 531 to 549; these read VFSA…FHGA, LYCT…FHYH, LNHH…HVSL, TAHH…GHMY, WHAQ…HHMY, LSLF…IFMV, AIIS…LYIH, and FLVH…LILL. [4Fe-4S] cluster contacts are provided by C573 and C582. Helical transmembrane passes span 589 to 610 and 664 to 686; these read HVFL…HFSW and LSAY…MFLF. H675 serves as a coordination point for chlorophyll a'. Chlorophyll a contacts are provided by M683 and Y691. Position 692 (W692) interacts with phylloquinone. A helical membrane pass occupies residues 724–744; the sequence is AVGVAHYLLGGIATTWAFFLA.

Belongs to the PsaA/PsaB family. As to quaternary structure, the PsaA/B heterodimer binds the P700 chlorophyll special pair and subsequent electron acceptors. PSI consists of a core antenna complex that captures photons, and an electron transfer chain that converts photonic excitation into a charge separation. The eukaryotic PSI reaction center is composed of at least 11 subunits. The cofactor is P700 is a chlorophyll a/chlorophyll a' dimer, A0 is one or more chlorophyll a, A1 is one or both phylloquinones and FX is a shared 4Fe-4S iron-sulfur center..

The protein localises to the plastid. The protein resides in the chloroplast thylakoid membrane. It carries out the reaction reduced [plastocyanin] + hnu + oxidized [2Fe-2S]-[ferredoxin] = oxidized [plastocyanin] + reduced [2Fe-2S]-[ferredoxin]. In terms of biological role, psaA and PsaB bind P700, the primary electron donor of photosystem I (PSI), as well as the electron acceptors A0, A1 and FX. PSI is a plastocyanin-ferredoxin oxidoreductase, converting photonic excitation into a charge separation, which transfers an electron from the donor P700 chlorophyll pair to the spectroscopically characterized acceptors A0, A1, FX, FA and FB in turn. Oxidized P700 is reduced on the lumenal side of the thylakoid membrane by plastocyanin. The protein is Photosystem I P700 chlorophyll a apoprotein A1 of Angiopteris evecta (Mule's foot fern).